The primary structure comprises 381 residues: Protein palisade (381 aa).

Residues 1 to 25 (MMMHSRNRSWTLTLLALGVVLATSA) form the signal peptide. 6 repeat units span residues 190 to 199 (PAAPAYEAPA), 200 to 209 (PPAPAYEAPA), 210 to 219 (PPAPAYEAPA), 220 to 229 (PAAPAYEAPA), 230 to 239 (PAAPAYEAPT), and 247 to 256 (PPAPAYEPPA). A 6 X 10 AA approximate tandem repeats of P-[AP]-A-P-A-Y-E-[AP]-P-[AT] region spans residues 190 to 256 (PAAPAYEAPA…PPAPAYEPPA (67 aa)). 2 disordered regions span residues 236–270 (EAPTTDYSAPAPPAPAYEPPASSYTQGYSQPAQPS) and 309–329 (TPTAPPPPPPPAPVYEAPSQN). The span at 311–321 (TAPPPPPPPAP) shows a compositional bias: pro residues.

Sulfated by pip; may be involved in embryo dorsal-ventral axis determination. Sulfation by pip may occur on covalently bound glycosaminoglycans. In terms of processing, may undergo both disulfide and non-disulfide cross-linking upon incorporation into the vitelline membrane. In terms of tissue distribution, present in the perivitelline space of stage 10 egg chambers and in the vitelline membrane adjacent to the oocyte in stage 13 and 14 egg chambers (at protein level).

Its subcellular location is the secreted. The protein resides in the extracellular space. It is found in the extracellular matrix. Minor protein component of the vitelline membrane. Involved in vitelline membrane biogenesis during late stages of oogenesis. Required for efficient disulfide and non-disulfide cross-linking of several vitelline membrane components. The polypeptide is Protein palisade (Drosophila melanogaster (Fruit fly)).